The chain runs to 190 residues: Holliday junction branch migration complex subunit RuvA (190 aa).

The domain I stretch occupies residues 1–64 (MIGRITGTLI…EDAQLLYGFG (64 aa)). Residues 65–137 (SSAERSTFRE…MRGKLGADIG (73 aa)) are domain II. The flexible linker stretch occupies residues 137 to 141 (GATPH). A domain III region spans residues 142-190 (AAGGHQSDILNALLALGYSDKESQAALKKLPEGVDVSEGIRLALKALVR).

This sequence belongs to the RuvA family. Homotetramer. Forms an RuvA(8)-RuvB(12)-Holliday junction (HJ) complex. HJ DNA is sandwiched between 2 RuvA tetramers; dsDNA enters through RuvA and exits via RuvB. An RuvB hexamer assembles on each DNA strand where it exits the tetramer. Each RuvB hexamer is contacted by two RuvA subunits (via domain III) on 2 adjacent RuvB subunits; this complex drives branch migration. In the full resolvosome a probable DNA-RuvA(4)-RuvB(12)-RuvC(2) complex forms which resolves the HJ.

Its subcellular location is the cytoplasm. Its function is as follows. The RuvA-RuvB-RuvC complex processes Holliday junction (HJ) DNA during genetic recombination and DNA repair, while the RuvA-RuvB complex plays an important role in the rescue of blocked DNA replication forks via replication fork reversal (RFR). RuvA specifically binds to HJ cruciform DNA, conferring on it an open structure. The RuvB hexamer acts as an ATP-dependent pump, pulling dsDNA into and through the RuvAB complex. HJ branch migration allows RuvC to scan DNA until it finds its consensus sequence, where it cleaves and resolves the cruciform DNA. This chain is Holliday junction branch migration complex subunit RuvA, found in Bordetella parapertussis (strain 12822 / ATCC BAA-587 / NCTC 13253).